Here is a 359-residue protein sequence, read N- to C-terminus: Alanine racemase, biosynthetic (359 aa).

Lys-34 (proton acceptor; specific for D-alanine) is an active-site residue. N6-(pyridoxal phosphate)lysine is present on Lys-34. Arg-129 provides a ligand contact to substrate. Tyr-255 serves as the catalytic Proton acceptor; specific for L-alanine. A substrate-binding site is contributed by Met-303.

This sequence belongs to the alanine racemase family. Monomer but homodimer in the presence of the substrate. Pyridoxal 5'-phosphate is required as a cofactor.

The catalysed reaction is L-alanine = D-alanine. It participates in amino-acid biosynthesis; D-alanine biosynthesis; D-alanine from L-alanine: step 1/1. It functions in the pathway cell wall biogenesis; peptidoglycan biosynthesis. In terms of biological role, catalyzes the interconversion of L-alanine and D-alanine. In Shigella sonnei, this protein is Alanine racemase, biosynthetic (alr).